Here is a 264-residue protein sequence, read N- to C-terminus: Tritrans,polycis-undecaprenyl-diphosphate synthase (geranylgeranyl-diphosphate specific) (264 aa).

D43 is an active-site residue. D43 lines the Mg(2+) pocket. Residues 44 to 47 (GNRR), W48, H60, and 88 to 90 (STE) contribute to the substrate site. Residue N91 is the Proton acceptor of the active site. Substrate contacts are provided by residues F92, R94, R213, and 219-221 (RIS). A Mg(2+)-binding site is contributed by E232.

The protein belongs to the UPP synthase family. As to quaternary structure, homodimer. Mg(2+) serves as cofactor.

It carries out the reaction geranylgeranyl diphosphate + 7 isopentenyl diphosphate = tri-trans,hepta-cis-undecaprenyl diphosphate + 7 diphosphate. Its function is as follows. Catalyzes the sequential condensation of isopentenyl diphosphate (IPP) with geranylgeranyl diphosphate (GGPP) to yield (2Z,6Z,10Z,14Z,18Z,22Z,26Z,30E,34E,38E)-undecaprenyl diphosphate (tritrans,heptacis-UPP). It is probably the precursor of glycosyl carrier lipids. The sequence is that of Tritrans,polycis-undecaprenyl-diphosphate synthase (geranylgeranyl-diphosphate specific) from Pyrococcus abyssi (strain GE5 / Orsay).